Consider the following 488-residue polypeptide: MKITADASDPAKRKTAALCGFVLEGAAGAAGLGGPGLDDLIKEAIGKNGGKKGRISMTGTPGMPSERVILAGLGPAGKVTSDGIRSEAGRLARQVRDMGLADFAVAAPSILDPAEEAALIVEGAELALYSFDEFKAEKAGNSPRLHILGGGPSAARAIKDAQSITAGVAFARGLANMPPNECPPDKLGRAAVKMCTGKKMRCIVLKKPELKKGGFGGIIAVGQGSSNEPRLIIVEYNGGKKGQKPIVLVGKAVTFDTGGISIKPGEKMDEMKFDKCGGCTVLGIMKAVEDLALPVNVIGIVPSVENMPGGSSYRPGDIVKLYSGKTAEILNTDAEGRLILADALSYGEKKYAPSEIIDFATLTGACIVALGNNVAGMVSNDDAFAKRIEGASERTAEEVWRLPINDDYMSMIKSEVADMRNLGMGRAAGTITAAAFLKNAIGDTPWVHLDIAGTAWNQPATKKKPYNPGGATGFGVRLVAGYLKGRAQ.

Mn(2+)-binding residues include Lys-251 and Asp-256. Lys-263 is an active-site residue. Residues Asp-274, Asp-333, and Glu-335 each contribute to the Mn(2+) site. The active site involves Arg-337.

This sequence belongs to the peptidase M17 family. Mn(2+) is required as a cofactor.

The protein localises to the cytoplasm. It carries out the reaction Release of an N-terminal amino acid, Xaa-|-Yaa-, in which Xaa is preferably Leu, but may be other amino acids including Pro although not Arg or Lys, and Yaa may be Pro. Amino acid amides and methyl esters are also readily hydrolyzed, but rates on arylamides are exceedingly low.. The enzyme catalyses Release of an N-terminal amino acid, preferentially leucine, but not glutamic or aspartic acids.. Presumably involved in the processing and regular turnover of intracellular proteins. Catalyzes the removal of unsubstituted N-terminal amino acids from various peptides. The chain is Probable cytosol aminopeptidase from Cenarchaeum symbiosum (strain A).